The primary structure comprises 281 residues: Elongation factor 1-delta (281 aa).

Alanine 2 is subject to N-acetylalanine. An N6-acetyllysine modification is found at lysine 17. 4 positions are modified to phosphoserine: serine 37, glutamate 40, serine 44, and serine 60. The residue at position 73 (threonine 73) is a Phosphothreonine. Residues 80–115 (LVVRIASLEVENQSLRGVVQELQQAISKLEARLNVL) form a leucine-zipper region. Residues serine 86, asparagine 91, leucine 94, and serine 106 each carry the phosphoserine modification. Lysine 107 is subject to N6-acetyllysine. Lysine 117 carries the post-translational modification N6-acetyllysine; alternate. Lysine 117 is modified (N6-succinyllysine; alternate). The tract at residues 118-172 (SSPGHRATAPQTQHVSPMRQVEPPAKKPATPAEDDEDDDIDLFGSDNEEEDKEAA) is disordered. Serine 119 carries the phosphoserine modification. Threonine 129 bears the Phosphothreonine mark. Position 133 is a phosphoserine (serine 133). Threonine 147 carries the phosphothreonine modification. Residues 149 to 169 (AEDDEDDDIDLFGSDNEEEDK) show a composition bias toward acidic residues. Serine 162 is subject to Phosphoserine; by CK2. The interval 173–281 (QLREERLRQY…SVDIAAFNKI (109 aa)) is catalytic (GEF).

The protein belongs to the EF-1-beta/EF-1-delta family. In terms of assembly, EF-1 is composed of 4 subunits: alpha, beta, delta isoform 1, and gamma. Isoform 2 interacts with HSF1 and NFE2L2. As to expression, isoform 2 is specifically expressed in brain, cerebellum and testis.

Its subcellular location is the nucleus. EF-1-beta and EF-1-delta stimulate the exchange of GDP bound to EF-1-alpha to GTP, regenerating EF-1-alpha for another round of transfer of aminoacyl-tRNAs to the ribosome. In terms of biological role, regulates induction of heat-shock-responsive genes through association with heat shock transcription factors and direct DNA-binding at heat shock promoter elements (HSE). This is Elongation factor 1-delta (EEF1D) from Homo sapiens (Human).